The primary structure comprises 311 residues: ATP synthase subunit a (311 aa).

The next 6 helical transmembrane spans lie at 62-82 (AVHV…GFIF), 123-143 (IAPM…MDLI), 170-190 (DPNA…MFSI), 213-233 (LWYL…VALI), 253-273 (IFIL…VGGV), and 276-296 (WAWA…FMVL).

It belongs to the ATPase A chain family. F-type ATPases have 2 components, CF(1) - the catalytic core - and CF(0) - the membrane proton channel. CF(1) has five subunits: alpha(3), beta(3), gamma(1), delta(1), epsilon(1). CF(0) has three main subunits: a(1), b(2) and c(9-12). The alpha and beta chains form an alternating ring which encloses part of the gamma chain. CF(1) is attached to CF(0) by a central stalk formed by the gamma and epsilon chains, while a peripheral stalk is formed by the delta and b chains.

The protein localises to the cell inner membrane. Key component of the proton channel; it plays a direct role in the translocation of protons across the membrane. This chain is ATP synthase subunit a, found in Saccharophagus degradans (strain 2-40 / ATCC 43961 / DSM 17024).